The sequence spans 447 residues: Phosphoglucosamine mutase (447 aa).

Serine 103 serves as the catalytic Phosphoserine intermediate. Mg(2+) contacts are provided by serine 103, aspartate 242, aspartate 244, and aspartate 246. Serine 103 is subject to Phosphoserine.

It belongs to the phosphohexose mutase family. Mg(2+) is required as a cofactor. Post-translationally, activated by phosphorylation.

It carries out the reaction alpha-D-glucosamine 1-phosphate = D-glucosamine 6-phosphate. Catalyzes the conversion of glucosamine-6-phosphate to glucosamine-1-phosphate. In Jannaschia sp. (strain CCS1), this protein is Phosphoglucosamine mutase.